Here is a 248-residue protein sequence, read N- to C-terminus: (2S)-[(R)-hydroxy(phenyl)methyl]succinyl-CoA dehydrogenase subunit BbsD (248 aa).

7 residues coordinate NAD(+): Ser15, Asp36, Asp62, Ile63, Asn89, Tyr153, and Lys157. The active-site Proton acceptor is Tyr153.

This sequence belongs to the short-chain dehydrogenases/reductases (SDR) family. Heterotetramer composed of 2 inactive BbsC subunits and 2 active BbsD subunits.

It carries out the reaction (2S)-[(R)-hydroxy(phenyl)methyl]succinyl-CoA + NAD(+) = (S)-2-benzoylsuccinyl-CoA + NADH + H(+). The protein operates within xenobiotic degradation; toluene degradation. With respect to regulation, activity is probably regulated by the inactive BbsC subunit. Its function is as follows. Involved in an anaerobic toluene degradation pathway. Active subunit that catalyzes the oxidation of 2-(alpha-hydroxybenzyl)succinyl-CoA to 2-benzoylsuccinyl-CoA. In vitro, can catalyze the NADH-dependent reduction of the artificial substrates 2,2-dichloroacetophene and 2,4'-dichloroacetophenone. In Thauera aromatica, this protein is (2S)-[(R)-hydroxy(phenyl)methyl]succinyl-CoA dehydrogenase subunit BbsD.